The sequence spans 144 residues: Cathelicidin-4 (144 aa).

Positions 1–29 (MQTQRASLSLGRWSLWLLLLGLVVPSASA) are cleaved as a signal peptide. Residues 30–130 (QALSYREAVL…DLNCNELQSV (101 aa)) constitute a propeptide that is removed on maturation. Disulfide bonds link cysteine 85–cysteine 96 and cysteine 107–cysteine 124. Arginine 143 carries the post-translational modification Arginine amide.

The protein belongs to the cathelicidin family. In terms of processing, elastase might be responsible for its maturation. Large granules of neutrophils.

The protein resides in the secreted. In terms of biological role, potent microbicidal activity; active against S.aureus and E.coli. This chain is Cathelicidin-4 (CATHL4), found in Bos taurus (Bovine).